Consider the following 323-residue polypeptide: Aspartate carbamoyltransferase catalytic subunit (323 aa).

Carbamoyl phosphate-binding residues include R71 and T72. Position 99 (K99) interacts with L-aspartate. Carbamoyl phosphate contacts are provided by R121, H151, and Q154. The L-aspartate site is built by R184 and R239. Residues G280 and P281 each contribute to the carbamoyl phosphate site.

The protein belongs to the aspartate/ornithine carbamoyltransferase superfamily. ATCase family. As to quaternary structure, heterododecamer (2C3:3R2) of six catalytic PyrB chains organized as two trimers (C3), and six regulatory PyrI chains organized as three dimers (R2).

It catalyses the reaction carbamoyl phosphate + L-aspartate = N-carbamoyl-L-aspartate + phosphate + H(+). The protein operates within pyrimidine metabolism; UMP biosynthesis via de novo pathway; (S)-dihydroorotate from bicarbonate: step 2/3. Its function is as follows. Catalyzes the condensation of carbamoyl phosphate and aspartate to form carbamoyl aspartate and inorganic phosphate, the committed step in the de novo pyrimidine nucleotide biosynthesis pathway. The polypeptide is Aspartate carbamoyltransferase catalytic subunit (Cupriavidus pinatubonensis (strain JMP 134 / LMG 1197) (Cupriavidus necator (strain JMP 134))).